Consider the following 262-residue polypeptide: Cerebellar degeneration-related antigen 1 (262 aa).

Tandem repeats lie at residues 3 to 8, 9 to 14, 15 to 20, 21 to 26, 27 to 32, 33 to 38, 39 to 44, 45 to 50, 51 to 56, 57 to 62, 63 to 68, 69 to 74, 75 to 80, 81 to 86, 87 to 92, 93 to 98, 99 to 104, 105 to 110, 111 to 116, 117 to 122, 123 to 128, 129 to 134, 135 to 140, 141 to 146, 147 to 152, 153 to 158, 159 to 164, 165 to 170, 171 to 176, 177 to 182, 183 to 188, 189 to 194, 195 to 200, and 201 to 206. Residues 3–140 are 23 X 6 AA approximate repeats; it reads WLEDVDFLED…EDLEAIGRCG (138 aa). The interval 141-176 is 6 X 6 AA approximate repeats; that stretch reads FSGRHGFFGRRRFSGRPKLSGRLGLLGRRGFSGRLG. Positions 177–206 are 5 X 6 AA approximate repeats; it reads GYWKTWIFWKTWIFWKTWIFRKTYIGWKTW.

Brain; predominantly expressed in normal neuroectodermal tissues and in certain malignant tumors.

In Homo sapiens (Human), this protein is Cerebellar degeneration-related antigen 1 (CDR1).